Reading from the N-terminus, the 553-residue chain is ATP synthase F(1) complex subunit alpha, mitochondrial (553 aa).

The N-terminal 43 residues, 1 to 43, are a transit peptide targeting the mitochondrion; that stretch reads MLSVRVAAAVVRALPRRAGLVSRNALGSSFIAARNFHASNTHL. A phosphoserine mark is found at S53 and S65. S76 is subject to Phosphoserine; alternate. A glycan (O-linked (GlcNAc) serine; alternate) is linked at S76. S106 is modified (phosphoserine). N6-acetyllysine is present on residues K123, K126, and K132. A Phosphothreonine modification is found at T134. An N6-acetyllysine; alternate modification is found at K161. K161 carries the post-translational modification N6-succinyllysine; alternate. S166 carries the phosphoserine modification. K167 carries the post-translational modification N6-acetyllysine; alternate. An N6-succinyllysine; alternate modification is found at K167. The residue at position 184 (S184) is a Phosphoserine. R204 bears the Omega-N-methylarginine mark. Q215, G217, K218, T219, and S220 together coordinate ATP. T219 contributes to the Mg(2+) binding site. N6-acetyllysine; alternate is present on residues K230 and K239. 2 positions are modified to N6-succinyllysine; alternate: K230 and K239. Position 240 is an N6-acetyllysine (K240). Residues K261 and K305 each carry the N6-acetyllysine; alternate modification. 2 positions are modified to N6-succinyllysine; alternate: K261 and K305. Residue D312 participates in Mg(2+) binding. The residue at position 427 (K427) is an N6-acetyllysine; alternate. K427 carries the N6-succinyllysine; alternate modification. An N6-acetyllysine modification is found at K434. Residues Q473 and Q475 each contribute to the ATP site. N6-acetyllysine; alternate occurs at positions 498, 506, 531, and 539. N6-succinyllysine; alternate is present on residues K498, K506, K531, and K539. Position 541 is an N6-acetyllysine (K541).

It belongs to the ATPase alpha/beta chains family. Homotrimer. Component of the ATP synthase complex composed at least of ATP5F1A/subunit alpha, ATP5F1B/subunit beta, ATP5MC1/subunit c (homooctomer), MT-ATP6/subunit a, MT-ATP8/subunit 8, ATP5ME/subunit e, ATP5MF/subunit f, ATP5MG/subunit g, ATP5MK/subunit k, ATP5MJ/subunit j, ATP5F1C/subunit gamma, ATP5F1D/subunit delta, ATP5F1E/subunit epsilon, ATP5PF/subunit F6, ATP5PB/subunit b, ATP5PD/subunit d, ATP5PO/subunit OSCP. ATP synthase complex consists of a soluble F(1) head domain (subunits alpha(3) and beta(3)) - the catalytic core - and a membrane F(0) domain - the membrane proton channel (subunits c, a, 8, e, f, g, k and j). These two domains are linked by a central stalk (subunits gamma, delta, and epsilon) rotating inside the F1 region and a stationary peripheral stalk (subunits F6, b, d, and OSCP). Interacts with ATPAF2. Interacts with HRG; the interaction occurs on the surface of T-cells and alters the cell morphology when associated with concanavalin (in vitro). Interacts with PLG (angiostatin peptide); the interaction inhibits most of the angiogenic properties of angiostatin. Interacts with BLOC1S1. Interacts with BCL2L1 isoform BCL-X(L); the interaction mediates the association of BCL2L1 isoform BCL-X(L) with the mitochondrial membrane F(1)F(0) ATP synthase and enhances neurons metabolic efficiency. Interacts with CLN5 and PPT1. Interacts with S100A1; this interaction increases F1-ATPase activity. Interacts with ABCB7; this interaction allows the regulation of cellular iron homeostasis and cellular reactive oxygen species (ROS) levels in cardiomyocytes. Post-translationally, acetylated on lysine residues. BLOC1S1 is required for acetylation.

The protein localises to the mitochondrion inner membrane. Its subcellular location is the cell membrane. Subunit alpha, of the mitochondrial membrane ATP synthase complex (F(1)F(0) ATP synthase or Complex V) that produces ATP from ADP in the presence of a proton gradient across the membrane which is generated by electron transport complexes of the respiratory chain. ATP synthase complex consist of a soluble F(1) head domain - the catalytic core - and a membrane F(1) domain - the membrane proton channel. These two domains are linked by a central stalk rotating inside the F(1) region and a stationary peripheral stalk. During catalysis, ATP synthesis in the catalytic domain of F(1) is coupled via a rotary mechanism of the central stalk subunits to proton translocation. In vivo, can only synthesize ATP although its ATP hydrolase activity can be activated artificially in vitro. With the catalytic subunit beta (ATP5F1B), forms the catalytic core in the F(1) domain. Subunit alpha does not bear the catalytic high-affinity ATP-binding sites. The chain is ATP synthase F(1) complex subunit alpha, mitochondrial from Pan troglodytes (Chimpanzee).